A 684-amino-acid chain; its full sequence is MKFKSLITTTLALGVLASTGANFNNNEASAAAKPLDKSSSSLHHGYSKVHVPYAITVNGTSQNILSSLTFNKNQNISYKDLEDRVKSVLKSDRGISDIDLRLSKQAKYTVYFKNGTKKVIDLKAGIYTADLINTSEIKAININVDTKKQVEDKKKDKANYQVPYTITVNGTSQNILSNLTFNKNQNISYKDLEDKVKSVLESNRGITDVDLRLSKQAKYTVNFKNGTKKVIDLKSGIYTANLINSSDIKSININVDTKKHIENKAKRNYQVPYSINLNGTSTNILSNLSFSNKPWTNYKNLTSQIKSVLKHDRGISEQDLKYAKKAYYTVYFKNGGKRILQLNSKNYTANLVHAKDVKRIEITVKTGTKAKADRYVPYTIAVNGTSTPILSDLKFTGDPRVGYKDISKKVKSVLKHDRGIGERELKYAKKATYTVHFKNGTKKVININSNISQLNLLYVQDIKKIDIDVKTGTKAKADSYVPYTIAVNGTSTPILSKLKISNKQLISYKYLNDKVKSVLKSERGISDLDLKFAKQAKYTVYFKNGKKQVVNLKSDIFTPNLFSAKDIKKIDIDVKQYTKSKKNNKSNNVKFPVTINKFENIVSNEFVFYNASKITINDLSIKLKSAMANDQGITKHDIGLAERAVYKVYFKNGSSKYVDLKTEYKDERVFKATDIKKVDIELKF.

Residues 1 to 30 (MKFKSLITTTLALGVLASTGANFNNNEASA) form the signal peptide. MAP repeat units lie at residues 45–154 (GYSK…EDKK), 156–265 (DKAN…ENKA), 266–374 (KRNY…KADR), 375–474 (YVPY…TGTK), 475–584 (AKAD…KKNN), and 586–684 (SNNV…ELKF).

It localises to the cell membrane. Functionally, binds various plasma and ECM-proteins. The polypeptide is 77 kDa membrane protein (Staphylococcus aureus (strain COL)).